We begin with the raw amino-acid sequence, 122 residues long: Large ribosomal subunit protein uL14c (122 aa).

This sequence belongs to the universal ribosomal protein uL14 family. In terms of assembly, part of the 50S ribosomal subunit.

It localises to the plastid. The protein localises to the chloroplast. Its function is as follows. Binds to 23S rRNA. The polypeptide is Large ribosomal subunit protein uL14c (Nicotiana sylvestris (Wood tobacco)).